We begin with the raw amino-acid sequence, 199 residues long: GTP cyclohydrolase-2 (199 aa).

49 to 53 is a GTP binding site; that stretch reads RVHSE. Residues Cys54, Cys65, and Cys67 each contribute to the Zn(2+) site. GTP contacts are provided by residues Gln70, 92-94, and Thr114; that span reads EGR. Residue Asp126 is the Proton acceptor of the active site. The active-site Nucleophile is Arg128. Positions 149 and 154 each coordinate GTP.

This sequence belongs to the GTP cyclohydrolase II family. Zn(2+) serves as cofactor.

The catalysed reaction is GTP + 4 H2O = 2,5-diamino-6-hydroxy-4-(5-phosphoribosylamino)-pyrimidine + formate + 2 phosphate + 3 H(+). It participates in cofactor biosynthesis; riboflavin biosynthesis; 5-amino-6-(D-ribitylamino)uracil from GTP: step 1/4. Catalyzes the conversion of GTP to 2,5-diamino-6-ribosylamino-4(3H)-pyrimidinone 5'-phosphate (DARP), formate and pyrophosphate. The chain is GTP cyclohydrolase-2 from Baumannia cicadellinicola subsp. Homalodisca coagulata.